Here is a 341-residue protein sequence, read N- to C-terminus: HTH-type transcriptional repressor PurR (341 aa).

Residues 2–56 (ATIKDVAKRANVSTTTVSHVINKTRFVAEETRNAVWAAIKELHYSPSAVARSLKV) enclose the HTH lacI-type domain. The H-T-H motif DNA-binding region spans 4-23 (IKDVAKRANVSTTTVSHVIN). The DNA-binding element occupies 48 to 56 (SAVARSLKV). Positions 73, 190, 192, 221, and 275 each coordinate hypoxanthine.

Homodimer.

It participates in purine metabolism; purine nucleotide biosynthesis [regulation]. Its function is as follows. Is the main repressor of the genes involved in the de novo synthesis of purine nucleotides, regulating purB, purC, purEK, purF, purHD, purL, purMN and guaBA expression. PurR is allosterically activated to bind its cognate DNA by binding the purine corepressors, hypoxanthine or guanine, thereby effecting transcription repression. This is HTH-type transcriptional repressor PurR from Salmonella typhimurium (strain LT2 / SGSC1412 / ATCC 700720).